We begin with the raw amino-acid sequence, 333 residues long: Photosystem II assembly protein Ycf48 (333 aa).

The signal sequence occupies residues 1 to 25 (MRVKMFKPLRLVLLIAVSVLLMAAR).

Belongs to the Ycf48 family. In terms of assembly, part of early PSII assembly complexes which includes D1 (psbA) and PsbI; not found in mature PSII. Binds to the lumenal side of PSII complexes. Interacts with YidC.

Its subcellular location is the cellular thylakoid lumen. Its function is as follows. A factor required for optimal assembly of photosystem II (PSII), acting in the early stages of PSII assembly. Also plays a role in replacement of photodamaged D1 (psbA). Assists YidC in synthesis of chlorophyll-binding proteins. The sequence is that of Photosystem II assembly protein Ycf48 from Synechococcus sp. (strain JA-2-3B'a(2-13)) (Cyanobacteria bacterium Yellowstone B-Prime).